We begin with the raw amino-acid sequence, 137 residues long: Nucleoside diphosphate kinase (137 aa).

6 residues coordinate ATP: K9, F57, R85, T91, R102, and N112. H115 (pros-phosphohistidine intermediate) is an active-site residue.

This sequence belongs to the NDK family. As to quaternary structure, homotetramer. It depends on Mg(2+) as a cofactor.

The protein resides in the cytoplasm. It carries out the reaction a 2'-deoxyribonucleoside 5'-diphosphate + ATP = a 2'-deoxyribonucleoside 5'-triphosphate + ADP. It catalyses the reaction a ribonucleoside 5'-diphosphate + ATP = a ribonucleoside 5'-triphosphate + ADP. In terms of biological role, major role in the synthesis of nucleoside triphosphates other than ATP. The ATP gamma phosphate is transferred to the NDP beta phosphate via a ping-pong mechanism, using a phosphorylated active-site intermediate. The protein is Nucleoside diphosphate kinase of Citrifermentans bemidjiense (strain ATCC BAA-1014 / DSM 16622 / JCM 12645 / Bem) (Geobacter bemidjiensis).